Here is a 444-residue protein sequence, read N- to C-terminus: MVEKFDKIYDYYVDKSYEPNKKRDIIAVFRITPAEGYTIEQVAGGVAAESSTGTWTTLYNWYEEERWADLSAKAYDFIDMGDGSWIVKIAYPFHAFEEANLPGLLASIAGNVFGMRRAKGLRLEDMYFPEKLIREFSGPAFGIEGVRKMLEIKDRPIYGVVPKPKVGYSPEEFEKLSYELLLNGADYMKDDENLTSPWYNRFEERAETIAKIIEKVESETGEKKTWFANITADVREMERRLEILADLGLKHAMVDVVITGWGALEYIRDLAADYGLAIHGHRAMHATFTRNPYHGISMFVLAKLYRLIGIDQLHVGTAGAGKLEGGKWDVIQNARILREEHYKPDENDVFHLEQKFYSIKPAFPTSSGGLHPGNLPIVIDALGTDIVLQLGGGTLGHPDGPAAGARAVRQAIDALVQGIPLDEYAKTHKELARALEKWGHVTPI.

Catalysis depends on Lys-163, which acts as the Proton acceptor. Lys-165 is a binding site for substrate. Lys-189, Asp-191, and Glu-192 together coordinate Mg(2+). Lys-189 is subject to N6-carboxylysine. His-281 acts as the Proton acceptor in catalysis. Residues Arg-282, His-314, 367 to 369, and 389 to 392 contribute to the substrate site; these read SGG and QLGG.

The protein belongs to the RuBisCO large chain family. Type III subfamily. In terms of assembly, homodimer or homodecamer. In contrast to form I RuBisCO, the form III RuBisCO is composed solely of large subunits. Mg(2+) is required as a cofactor.

It catalyses the reaction 2 (2R)-3-phosphoglycerate + 2 H(+) = D-ribulose 1,5-bisphosphate + CO2 + H2O. The enzyme catalyses D-ribulose 1,5-bisphosphate + O2 = 2-phosphoglycolate + (2R)-3-phosphoglycerate + 2 H(+). Its function is as follows. Catalyzes the addition of molecular CO(2) and H(2)O to ribulose 1,5-bisphosphate (RuBP), generating two molecules of 3-phosphoglycerate (3-PGA). Functions in an archaeal AMP degradation pathway, together with AMP phosphorylase and R15P isomerase. The sequence is that of Ribulose bisphosphate carboxylase from Thermococcus onnurineus (strain NA1).